The following is a 147-amino-acid chain: Myoglobin (147 aa).

The Globin domain maps to 2–141 (ADFDMVLKCW…IIADMEADYK (140 aa)). Histidine 60 provides a ligand contact to nitrite. Histidine 60 serves as a coordination point for O2. Histidine 89 contributes to the heme b binding site.

This sequence belongs to the globin family. Monomeric.

The protein localises to the cytoplasm. It localises to the sarcoplasm. It carries out the reaction Fe(III)-heme b-[protein] + nitric oxide + H2O = Fe(II)-heme b-[protein] + nitrite + 2 H(+). The enzyme catalyses H2O2 + AH2 = A + 2 H2O. Monomeric heme protein which primary function is to store oxygen and facilitate its diffusion within muscle tissues. Reversibly binds oxygen through a pentacoordinated heme iron and enables its timely and efficient release as needed during periods of heightened demand. Depending on the oxidative conditions of tissues and cells, and in addition to its ability to bind oxygen, it also has a nitrite reductase activity whereby it regulates the production of bioactive nitric oxide. Under stress conditions, like hypoxia and anoxia, it also protects cells against reactive oxygen species thanks to its pseudoperoxidase activity. This chain is Myoglobin (mb), found in Notothenia neglecta (Yellowbelly rockcod).